The following is a 332-amino-acid chain: Aquaporin Lacbi1:317173 (332 aa).

Positions 1–20 are enriched in polar residues; that stretch reads MSGQHQITEQSSRNPLSRVS. Residues 1 to 45 form a disordered region; sequence MSGQHQITEQSSRNPLSRVSTLLPEKPLSPTSTYAGTQKHPEAPR. At 1–66 the chain is on the cytoplasmic side; sequence MSGQHQITEQ…RNAIRKPMAE (66 aa). Residues 67-87 traverse the membrane as a helical segment; sequence FFGVALLIIFGAGSACQVVLS. Over 88 to 100 the chain is Extracellular; sequence TNPDVASSARGSF. The chain crosses the membrane as a helical span at residues 101–121; that stretch reads LSINFGWAIGIAMGVWVSGGI. The Cytoplasmic segment spans residues 122–144; sequence SGGHINPAITIAMATYRGFPWRK. Residues 127 to 129 carry the NPA 1 motif; it reads NPA. Residues 145–165 form a helical membrane-spanning segment; the sequence is VPSYILAQVLGGVVGAGLVYA. Over 166-199 the chain is Extracellular; it reads NYIHAIDIFEGGHHIRTQATASLFATYALPYMTQ. The helical transmembrane segment at 200 to 220 threads the bilayer; it reads ASCFFSEFLATAVLSMMVFAL. Residues 221–230 lie on the Cytoplasmic side of the membrane; that stretch reads TDKRNHSPTN. A helical transmembrane segment spans residues 231-251; it reads GLLPFALFILFVGLGASLGME. Residues 252–283 are Extracellular-facing; the sequence is TAYALNPARDFGPRLFLAMAGYGKALFNYRSQ. The short motif at 257–259 is the NPA 2 element; sequence NPA. A helical membrane pass occupies residues 284 to 304; sequence YWLWAPIIAPVLGAQAGGLLY. The Cytoplasmic segment spans residues 305–332; the sequence is DTFLNDGDNSPIKWRCASSQEHQLAEVV.

The protein belongs to the MIP/aquaporin (TC 1.A.8) family.

The protein resides in the membrane. It carries out the reaction H2O(in) = H2O(out). It catalyses the reaction NH4(+)(in) = NH4(+)(out). In terms of biological role, water channel required to facilitate the transport of water across membranes. Acts as the most efficient Laccaria water channel. In addition to water, also shows strong ammonium transport activity. May be involved in fungal nitrogen (ammonium) support of the plant host in symbiosis. This chain is Aquaporin Lacbi1:317173, found in Laccaria bicolor (strain S238N-H82 / ATCC MYA-4686) (Bicoloured deceiver).